The primary structure comprises 71 residues: Pro-MCH (71 aa).

The first 20 residues, 1–20, serve as a signal peptide directing secretion; that stretch reads AKMNLSSYILILTFSLFSQG.

This sequence belongs to the melanin-concentrating hormone family.

The protein localises to the secreted. The protein is Pro-MCH (PMCH) of Hylobates lar (Lar gibbon).